A 62-amino-acid chain; its full sequence is Large ribosomal subunit protein eL24 (62 aa).

4 residues coordinate Zn(2+): cysteine 6, cysteine 9, cysteine 32, and cysteine 36. The segment at 6–36 adopts a C4-type zinc-finger fold; it reads CYFCGKMLEPGTGKLYVKKDGSTYFMCSSKC.

The protein belongs to the eukaryotic ribosomal protein eL24 family. In terms of assembly, part of the 50S ribosomal subunit. Forms a cluster with proteins L3 and L14. The cofactor is Zn(2+).

Binds to the 23S rRNA. This is Large ribosomal subunit protein eL24 from Methanosarcina acetivorans (strain ATCC 35395 / DSM 2834 / JCM 12185 / C2A).